The chain runs to 136 residues: Ribonuclease P protein component (136 aa).

The protein belongs to the RnpA family. In terms of assembly, consists of a catalytic RNA component (M1 or rnpB) and a protein subunit.

The catalysed reaction is Endonucleolytic cleavage of RNA, removing 5'-extranucleotides from tRNA precursor.. Its function is as follows. RNaseP catalyzes the removal of the 5'-leader sequence from pre-tRNA to produce the mature 5'-terminus. It can also cleave other RNA substrates such as 4.5S RNA. The protein component plays an auxiliary but essential role in vivo by binding to the 5'-leader sequence and broadening the substrate specificity of the ribozyme. The chain is Ribonuclease P protein component from Arthrobacter sp. (strain FB24).